The following is a 356-amino-acid chain: NADH-quinone oxidoreductase subunit H (356 aa).

8 helical membrane-spanning segments follow: residues Ile-18–Ile-38, Gly-87–Ile-107, Val-120–Gly-140, Ile-166–Val-186, Trp-202–Val-222, Ala-265–Ile-285, Trp-292–Met-312, and Leu-328–Leu-348.

The protein belongs to the complex I subunit 1 family. As to quaternary structure, NDH-1 is composed of 14 different subunits. Subunits NuoA, H, J, K, L, M, N constitute the membrane sector of the complex.

It localises to the cell inner membrane. The enzyme catalyses a quinone + NADH + 5 H(+)(in) = a quinol + NAD(+) + 4 H(+)(out). In terms of biological role, NDH-1 shuttles electrons from NADH, via FMN and iron-sulfur (Fe-S) centers, to quinones in the respiratory chain. The immediate electron acceptor for the enzyme in this species is believed to be ubiquinone. Couples the redox reaction to proton translocation (for every two electrons transferred, four hydrogen ions are translocated across the cytoplasmic membrane), and thus conserves the redox energy in a proton gradient. This subunit may bind ubiquinone. This Nitrobacter hamburgensis (strain DSM 10229 / NCIMB 13809 / X14) protein is NADH-quinone oxidoreductase subunit H.